A 206-amino-acid chain; its full sequence is MMPYNTPPNIQEPMNFASSNPFGIIPDALSFQNFKYDRLQQQQQQQQQQQQNRTASSLQQPQQQQPISPPLFLVGAGTSENSNLNKNANTSTIPPLLFSRSSQHYVVPDIDHSSIIYKNNICKSFKDDLFFCPRSLLSLEEQQACEKMDRLTAEQMSLYHQNTQSSSNPGSMSSSPPNSASSIFNSRPKFNPYTSQSFNPLESVQE.

Disordered regions lie at residues 38-88 (RLQQ…NKNA) and 160-206 (HQNT…SVQE). The segment covering 40-73 (QQQQQQQQQQQQNRTASSLQQPQQQQPISPPLFL) has biased composition (low complexity). S68 bears the Phosphoserine mark. Polar residues predominate over residues 78–88 (TSENSNLNKNA). Positions 165 to 186 (SSSNPGSMSSSPPNSASSIFNS) are enriched in low complexity. Residues 192 to 206 (PYTSQSFNPLESVQE) are compositionally biased toward polar residues.

The protein resides in the cytoplasm. This is an uncharacterized protein from Saccharomyces cerevisiae (strain ATCC 204508 / S288c) (Baker's yeast).